The sequence spans 363 residues: MTLTRLLIRDFRNIAAADLPLATGFNFLVGSNGSGKTSVLEAIYTLGHGRSFRSIQAGRVILHGCDEFVLHGRLGQQENERERSIGLSKNRNGDSKVRIDGSDGGKIAELAKMLPMQLITPEGFTLLNGGPKYRRAFIDWGCFHNEPRFFSAWVNLKRLLKQRNAALRQVTRYSQIRPWDQELIPLANQINQWRGEYVTNITQDITNTCKQFLPEFTLSFSFQQGWDKESDYAELLERQFERDRTLTYTASGPHKADLRIRAEGTPVEDMLSRGQLKLLMCALRLAQGEYFTRQSGQQCLYLLDDFASELDTSRRQLLAARLKSTQAQVFVSAINPDQITDMLDGNSKMFRVENGKIEVQPQD.

30 to 37 (GSNGSGKT) contributes to the ATP binding site.

Belongs to the RecF family.

It is found in the cytoplasm. The RecF protein is involved in DNA metabolism; it is required for DNA replication and normal SOS inducibility. RecF binds preferentially to single-stranded, linear DNA. It also seems to bind ATP. In Photorhabdus laumondii subsp. laumondii (strain DSM 15139 / CIP 105565 / TT01) (Photorhabdus luminescens subsp. laumondii), this protein is DNA replication and repair protein RecF.